Reading from the N-terminus, the 132-residue chain is MKKTGILNSHLAKLADDLGHTDRVCIGDLGLPVPNGIPKIDLSLTSGIPSFQEVLDIYLENILVEKVILAEEIKEANPDQLSRLLAKLDNSVSIEYVSHDHLKQMTQDVKAVIRTGENTPYSNIILQSGVII.

Residue His20 is the Proton donor of the active site. Residues Asp28, His99, and 121–123 (YSN) each bind substrate.

The protein belongs to the RbsD / FucU family. RbsD subfamily. As to quaternary structure, homodecamer.

The protein localises to the cytoplasm. The enzyme catalyses beta-D-ribopyranose = beta-D-ribofuranose. The protein operates within carbohydrate metabolism; D-ribose degradation; D-ribose 5-phosphate from beta-D-ribopyranose: step 1/2. Functionally, catalyzes the interconversion of beta-pyran and beta-furan forms of D-ribose. The protein is D-ribose pyranase of Streptococcus agalactiae serotype III (strain NEM316).